A 348-amino-acid chain; its full sequence is Protein RecA (348 aa).

ATP is bound at residue 65–72 (GPESSGKT). The segment covering 326–336 (LLTPAEEKPET) has biased composition (basic and acidic residues). A disordered region spans residues 326 to 348 (LLTPAEEKPETDAAPEIEENEEF). Residues 338–348 (AAPEIEENEEF) show a composition bias toward acidic residues.

The protein belongs to the RecA family.

It is found in the cytoplasm. Functionally, can catalyze the hydrolysis of ATP in the presence of single-stranded DNA, the ATP-dependent uptake of single-stranded DNA by duplex DNA, and the ATP-dependent hybridization of homologous single-stranded DNAs. It interacts with LexA causing its activation and leading to its autocatalytic cleavage. The chain is Protein RecA from Aliivibrio fischeri (strain ATCC 700601 / ES114) (Vibrio fischeri).